A 31-amino-acid chain; its full sequence is Ranatuerin-2PL (31 aa).

The cysteines at positions 23 and 29 are disulfide-linked.

Expressed by the skin glands.

It is found in the secreted. In terms of biological role, antimicrobial activity against Gram-negative bacterium E.coli. The chain is Ranatuerin-2PL from Lithobates palustris (Pickerel frog).